The sequence spans 100 residues: Aspartyl/glutamyl-tRNA(Asn/Gln) amidotransferase subunit C (100 aa).

Belongs to the GatC family. As to quaternary structure, heterotrimer of A, B and C subunits.

The catalysed reaction is L-glutamyl-tRNA(Gln) + L-glutamine + ATP + H2O = L-glutaminyl-tRNA(Gln) + L-glutamate + ADP + phosphate + H(+). It carries out the reaction L-aspartyl-tRNA(Asn) + L-glutamine + ATP + H2O = L-asparaginyl-tRNA(Asn) + L-glutamate + ADP + phosphate + 2 H(+). Allows the formation of correctly charged Asn-tRNA(Asn) or Gln-tRNA(Gln) through the transamidation of misacylated Asp-tRNA(Asn) or Glu-tRNA(Gln) in organisms which lack either or both of asparaginyl-tRNA or glutaminyl-tRNA synthetases. The reaction takes place in the presence of glutamine and ATP through an activated phospho-Asp-tRNA(Asn) or phospho-Glu-tRNA(Gln). The sequence is that of Aspartyl/glutamyl-tRNA(Asn/Gln) amidotransferase subunit C from Novosphingobium aromaticivorans (strain ATCC 700278 / DSM 12444 / CCUG 56034 / CIP 105152 / NBRC 16084 / F199).